The chain runs to 428 residues: MGPLSAPPCTQRITWKGLLLTALLLNFWNLPTTAQVTIEAEPTKVSKGKDVLLLVHNLPQNLAGYIWYKGQMKDLYHYITSYVVDGQIIIYGPAYSGRETVYSNASLLIQNVTREDAGSYTLHIVKRGDGTRGETGHFTFTLYLETPKPSISSSNLYPREDMEAVSLTCDPETPDASYLWWMNGQSLPMTHSLQLSKNKRTLFLFGVTKYTAGPYECEIRNPVSASRSDPVTLNLLPKLPKPYITINNLNPRENKDVLAFTCEPKSENYTYIWWLNGQSLPVSPRVKRPIENRILILPSVTRNETGPYQCEIQDRYGGIRSYPVTLNVLYGPDLPRIYPSFTYYHSGENLYLSCFADSNPPAEYSWTINGKFQLSGQKLFIPQITTKHSGLYACSVRNSATGMESSKSMTVKVSAPSGTGHLPGLNPL.

The first 34 residues, 1 to 34 (MGPLSAPPCTQRITWKGLLLTALLLNFWNLPTTA), serve as a signal peptide directing secretion. The Ig-like V-type domain occupies 35–144 (QVTIEAEPTK…TGHFTFTLYL (110 aa)). Residues N104 and N111 are each glycosylated (N-linked (GlcNAc...) asparagine). The Cell attachment site motif lies at 127-129 (RGD). 3 Ig-like C2-type domains span residues 147–234 (PKPS…VTLN), 240–327 (PKPY…VTLN), and 335–410 (PRIY…KSMT). 3 disulfides stabilise this stretch: C169–C217, C262–C310, and C354–C394. N-linked (GlcNAc...) asparagine glycosylation is found at N268 and N303.

Belongs to the immunoglobulin superfamily. CEA family.

It localises to the secreted. The sequence is that of Pregnancy-specific beta-1-glycoprotein 3 (PSG3) from Homo sapiens (Human).